Here is a 356-residue protein sequence, read N- to C-terminus: Proline-rich protein 19 (356 aa).

Positions 1-12 are enriched in polar residues; it reads MDTQGPVSQPFQ. 4 disordered regions span residues 1–53, 95–143, 216–255, and 312–331; these read MDTQ…RDPP, LVPG…ELSG, INSP…RGSL, and PSSP…SPPS. The span at 19–29 shows a compositional bias: basic residues; the sequence is RVRRRKTRRER.

As to quaternary structure, interacts with CNTD1.

It is found in the nucleus. The protein resides in the chromosome. Promotes meiotic crossing over formation through its interaction with CNTD1 by participating in the crossover differentiation step of crossover-specific recombination intermediates. In Homo sapiens (Human), this protein is Proline-rich protein 19.